Here is a 276-residue protein sequence, read N- to C-terminus: Tryptophan synthase alpha chain (276 aa).

Residues Glu-55 and Asp-66 each act as proton acceptor in the active site.

The protein belongs to the TrpA family. Tetramer of two alpha and two beta chains.

The catalysed reaction is (1S,2R)-1-C-(indol-3-yl)glycerol 3-phosphate + L-serine = D-glyceraldehyde 3-phosphate + L-tryptophan + H2O. The protein operates within amino-acid biosynthesis; L-tryptophan biosynthesis; L-tryptophan from chorismate: step 5/5. The alpha subunit is responsible for the aldol cleavage of indoleglycerol phosphate to indole and glyceraldehyde 3-phosphate. This chain is Tryptophan synthase alpha chain, found in Gloeobacter violaceus (strain ATCC 29082 / PCC 7421).